The chain runs to 513 residues: Histidine ammonia-lyase (513 aa).

Positions 143-145 form a cross-link, 5-imidazolinone (Ala-Gly); it reads ASG. Position 144 is a 2,3-didehydroalanine (Ser) (Ser144).

The protein belongs to the PAL/histidase family. Contains an active site 4-methylidene-imidazol-5-one (MIO), which is formed autocatalytically by cyclization and dehydration of residues Ala-Ser-Gly.

The protein resides in the cytoplasm. It catalyses the reaction L-histidine = trans-urocanate + NH4(+). It participates in amino-acid degradation; L-histidine degradation into L-glutamate; N-formimidoyl-L-glutamate from L-histidine: step 1/3. The polypeptide is Histidine ammonia-lyase (Xanthomonas campestris pv. campestris (strain B100)).